The chain runs to 331 residues: CRISPR-associated endonuclease Cas1 1 (331 aa).

3 residues coordinate Mn(2+): glutamate 161, histidine 226, and glutamate 241.

This sequence belongs to the CRISPR-associated endonuclease Cas1 family. In terms of assembly, homodimer, forms a heterotetramer with a Cas2 homodimer. It depends on Mg(2+) as a cofactor. Mn(2+) is required as a cofactor.

In terms of biological role, CRISPR (clustered regularly interspaced short palindromic repeat), is an adaptive immune system that provides protection against mobile genetic elements (viruses, transposable elements and conjugative plasmids). CRISPR clusters contain spacers, sequences complementary to antecedent mobile elements, and target invading nucleic acids. CRISPR clusters are transcribed and processed into CRISPR RNA (crRNA). Acts as a dsDNA endonuclease. Involved in the integration of spacer DNA into the CRISPR cassette. This is CRISPR-associated endonuclease Cas1 1 from Methanospirillum hungatei JF-1 (strain ATCC 27890 / DSM 864 / NBRC 100397 / JF-1).